A 508-amino-acid chain; its full sequence is Prenylcysteine oxidase 1 (508 aa).

A signal peptide spans M1–A31. Residues N199, N291, and N356 are each glycosylated (N-linked (GlcNAc...) asparagine).

This sequence belongs to the prenylcysteine oxidase family. FAD is required as a cofactor.

The protein localises to the lysosome. The enzyme catalyses an S-polyprenyl-L-cysteine + O2 + H2O = a polyprenal + L-cysteine + H2O2. It catalyses the reaction S-(2E,6E)-farnesyl-L-cysteine + O2 + H2O = (2E,6E)-farnesal + L-cysteine + H2O2. The catalysed reaction is [(2E,6E,10E)-geranylgeranyl]-L-cysteine + O2 + H2O = (2E,6E,10E)-geranylgeranial + L-cysteine + H2O2. In terms of biological role, prenylcysteine oxidase that cleaves the thioether bond of prenyl-L-cysteines, such as farnesylcysteine and geranylgeranylcysteine. Only active against free prenylcysteines and not prenylcysteine residues within prenylated proteins or peptides. Involved in the final step in the degradation of prenylated proteins, by degrading prenylcysteines after the protein has been degraded. In Bos taurus (Bovine), this protein is Prenylcysteine oxidase 1.